The following is a 239-amino-acid chain: Ribonuclease PH (239 aa).

Residues Arg86 and 124 to 126 (GTR) contribute to the phosphate site.

This sequence belongs to the RNase PH family. In terms of assembly, homohexameric ring arranged as a trimer of dimers.

The catalysed reaction is tRNA(n+1) + phosphate = tRNA(n) + a ribonucleoside 5'-diphosphate. Functionally, phosphorolytic 3'-5' exoribonuclease that plays an important role in tRNA 3'-end maturation. Removes nucleotide residues following the 3'-CCA terminus of tRNAs; can also add nucleotides to the ends of RNA molecules by using nucleoside diphosphates as substrates, but this may not be physiologically important. Probably plays a role in initiation of 16S rRNA degradation (leading to ribosome degradation) during starvation. This chain is Ribonuclease PH, found in Cupriavidus necator (strain ATCC 17699 / DSM 428 / KCTC 22496 / NCIMB 10442 / H16 / Stanier 337) (Ralstonia eutropha).